The chain runs to 271 residues: Sec-independent protein translocase protein TatC (271 aa).

5 helical membrane-spanning segments follow: residues 24–44, 78–98, 112–132, 159–179, and 215–235; these read ISVGAIIVGFILCYSFSEQIF, FFAGLFLAMPVLFTQMWLFIA, FLFVTPVLFFMGGTLAYYFVF, LVIKLIIAFGITFELPVGLLL, and FTQVMLAIPIMLMYEISIFFG. The interval 247–271 is disordered; the sequence is AAEEAQWAADHNVDDDDVDHPEHKA.

The protein belongs to the TatC family. The Tat system comprises two distinct complexes: a TatABC complex, containing multiple copies of TatA, TatB and TatC subunits, and a separate TatA complex, containing only TatA subunits. Substrates initially bind to the TatABC complex, which probably triggers association of the separate TatA complex to form the active translocon.

The protein resides in the cell inner membrane. In terms of biological role, part of the twin-arginine translocation (Tat) system that transports large folded proteins containing a characteristic twin-arginine motif in their signal peptide across membranes. Together with TatB, TatC is part of a receptor directly interacting with Tat signal peptides. The protein is Sec-independent protein translocase protein TatC of Magnetococcus marinus (strain ATCC BAA-1437 / JCM 17883 / MC-1).